The sequence spans 480 residues: 3-isopropylmalate dehydratase large subunit (480 aa).

Positions 360, 418, and 421 each coordinate [4Fe-4S] cluster.

Belongs to the aconitase/IPM isomerase family. LeuC type 1 subfamily. As to quaternary structure, heterodimer of LeuC and LeuD. It depends on [4Fe-4S] cluster as a cofactor.

It carries out the reaction (2R,3S)-3-isopropylmalate = (2S)-2-isopropylmalate. It participates in amino-acid biosynthesis; L-leucine biosynthesis; L-leucine from 3-methyl-2-oxobutanoate: step 2/4. In terms of biological role, catalyzes the isomerization between 2-isopropylmalate and 3-isopropylmalate, via the formation of 2-isopropylmaleate. The protein is 3-isopropylmalate dehydratase large subunit of Anaeromyxobacter dehalogenans (strain 2CP-1 / ATCC BAA-258).